A 461-amino-acid polypeptide reads, in one-letter code: Inositol-trisphosphate 3-kinase A (461 aa).

Residues 1–29 (MTLPGGPTGMARPGGARPCSPGLERAPRR) are disordered. A required for cytoskeleton location region spans residues 1–133 (MTLPGGPTGM…SVSSTGSSSL (133 aa)). An omega-N-methylarginine mark is found at Arg-35, Arg-55, and Arg-62. Residues 49–160 (AAAGEPRARG…GNVQLEAGED (112 aa)) form a disordered region. Residues 118–134 (RRLSTSSVSSTGSSSLL) show a composition bias toward low complexity. A phosphoserine mark is found at Ser-137 and Ser-197. Residues Ser-197, Lys-209, 249 to 251 (QDL), and Asp-262 contribute to the ATP site. 2 residues coordinate substrate: Lys-264 and Arg-285. A calmodulin-binding region spans residues 287-295 (DMYKKMLAV). 312–319 (KPRYMQWR) lines the substrate pocket. ATP contacts are provided by Lys-336 and Asp-416. Lys-419 contacts substrate.

The protein belongs to the inositol phosphokinase (IPK) family. In terms of tissue distribution, expressed in brain.

It is found in the cytoplasm. Its subcellular location is the cytoskeleton. The enzyme catalyses 1D-myo-inositol 1,4,5-trisphosphate + ATP = 1D-myo-inositol 1,3,4,5-tetrakisphosphate + ADP + H(+). Its activity is regulated as follows. Activated by calcium/calmodulin. In terms of biological role, catalyzes the phosphorylation of 1D-myo-inositol 1,4,5-trisphosphate (InsP3) into 1D-myo-inositol 1,3,4,5-tetrakisphosphate and participates to the regulation of calcium homeostasis. The chain is Inositol-trisphosphate 3-kinase A from Homo sapiens (Human).